Reading from the N-terminus, the 557-residue chain is Protein PECTIC ARABINOGALACTAN SYNTHESIS-RELATED (557 aa).

The tract at residues 1-54 is disordered; sequence MAELRHSSSLGSRSSSSPLRAAGDEDSSSPHVHDHSPNGGDDEDGRPRHPSRDR. The Cytoplasmic portion of the chain corresponds to 1 to 79; sequence MAELRHSSSL…DPRVSPQKNK (79 aa). Residues 7–20 are compositionally biased toward low complexity; that stretch reads SSSLGSRSSSSPLR. The segment covering 45–54 has biased composition (basic and acidic residues); it reads GRPRHPSRDR. Residues 80–100 traverse the membrane as a helical; Signal-anchor for type II membrane protein segment; sequence ISLLLILILAIASLISVYGII. The Lumenal portion of the chain corresponds to 101-557; the sequence is NHLNAPYLCK…NPLTPCMCKA (457 aa). N-linked (GlcNAc...) asparagine glycans are attached at residues asparagine 156, asparagine 188, and asparagine 324. 336–338 lines the substrate pocket; that stretch reads HLR. The N-linked (GlcNAc...) asparagine glycan is linked to asparagine 375.

It belongs to the glycosyltransferase GT106 family. In terms of tissue distribution, widely expressed with the highest expression in reproductive tissues and roots.

The protein resides in the golgi apparatus membrane. The protein operates within glycan metabolism; pectin biosynthesis. Its function is as follows. Glycosyltransferase involved in the biosynthesis of pectic type-II arabinogalactans. The polypeptide is Protein PECTIC ARABINOGALACTAN SYNTHESIS-RELATED (Arabidopsis thaliana (Mouse-ear cress)).